Reading from the N-terminus, the 347-residue chain is NADH-ubiquinone oxidoreductase chain 2 (347 aa).

11 helical membrane passes run 3–23, 25–45, 59–79, 96–116, 122–142, 149–169, 178–198, 200–220, 240–260, 276–296, and 326–346; these read PLIF…VMTT, HWVM…PILM, YFLT…INLV, IIMT…FWVP, VQLS…MSIL, INLD…GWGG, IMAY…VYNP, MALL…MMLM, LTTA…LSGF, MIMP…YMRL, and LSPL…LALL.

This sequence belongs to the complex I subunit 2 family. In terms of assembly, core subunit of respiratory chain NADH dehydrogenase (Complex I) which is composed of 45 different subunits. Interacts with TMEM242.

It is found in the mitochondrion inner membrane. It catalyses the reaction a ubiquinone + NADH + 5 H(+)(in) = a ubiquinol + NAD(+) + 4 H(+)(out). Core subunit of the mitochondrial membrane respiratory chain NADH dehydrogenase (Complex I) which catalyzes electron transfer from NADH through the respiratory chain, using ubiquinone as an electron acceptor. Essential for the catalytic activity and assembly of complex I. The polypeptide is NADH-ubiquinone oxidoreductase chain 2 (Nyctimene albiventer (Common tube-nosed fruit bat)).